Here is a 396-residue protein sequence, read N- to C-terminus: Elongation factor Tu (396 aa).

In terms of domain architecture, tr-type G spans 10 to 205 (KPHVNIGTIG…AVDESIPDPV (196 aa)). The segment at 19–26 (GHVDHGKT) is G1. 19–26 (GHVDHGKT) provides a ligand contact to GTP. Position 26 (T26) interacts with Mg(2+). The segment at 62–66 (GITIN) is G2. Positions 83 to 86 (DAPG) are G3. Residues 83–87 (DAPGH) and 138–141 (NKAD) each bind GTP. The tract at residues 138-141 (NKAD) is G4. Positions 175–177 (SAL) are G5.

Belongs to the TRAFAC class translation factor GTPase superfamily. Classic translation factor GTPase family. EF-Tu/EF-1A subfamily. Monomer.

The protein localises to the cytoplasm. It catalyses the reaction GTP + H2O = GDP + phosphate + H(+). In terms of biological role, GTP hydrolase that promotes the GTP-dependent binding of aminoacyl-tRNA to the A-site of ribosomes during protein biosynthesis. The sequence is that of Elongation factor Tu from Mycobacterium bovis (strain ATCC BAA-935 / AF2122/97).